The following is a 353-amino-acid chain: BLOC-1-related complex subunit 6 (353 aa).

The disordered stretch occupies residues 23 to 194 (AIFGDGPGQT…SGAGGGRRAT (172 aa)). Basic and acidic residues predominate over residues 102-126 (FDLHGSSRRKDPEPPEAKPESERVC). Phosphoserine occurs at positions 130 and 166. Residues 172–191 (GACGGPASSGGAESGAGGGR) are compositionally biased toward gly residues. Threonine 194 bears the Phosphothreonine mark. Serine 197 is subject to Phosphoserine. The disordered stretch occupies residues 225 to 253 (LSGAPQPPPPAPTRPCSAPTPTPAIPPID). Residues 229–253 (PQPPPPAPTRPCSAPTPTPAIPPID) show a composition bias toward pro residues.

It belongs to the BORCS6 family. In terms of assembly, component of the BLOC-one-related complex (BORC) which is composed of BLOC1S1, BLOC1S2, BORCS5, BORCS6, BORCS7, BORCS8, KXD1 and SNAPIN.

It is found in the lysosome membrane. In terms of biological role, as part of the BORC complex may play a role in lysosomes movement and localization at the cell periphery. Associated with the cytosolic face of lysosomes, the BORC complex may recruit ARL8B and couple lysosomes to microtubule plus-end-directed kinesin motor. The chain is BLOC-1-related complex subunit 6 from Bos taurus (Bovine).